Consider the following 476-residue polypeptide: Cytosolic iron-sulfur assembly component 3 (476 aa).

The residue at position 2 (Ala2) is an N-acetylalanine. Residues Cys24, Cys71, Cys74, Cys77, Cys190, Cys246, Cys395, and Cys399 each coordinate [4Fe-4S] cluster.

Belongs to the NARF family. As to quaternary structure, external component of the CIA complex. In the CIA complex, interacts directly with CIAO1 and MMS19.

Functionally, component of the cytosolic iron-sulfur protein assembly (CIA) complex, a multiprotein complex that mediates the incorporation of iron-sulfur cluster into extramitochondrial Fe/S proteins. Seems to negatively regulate the level of HIF1A expression, although this effect could be indirect. The protein is Cytosolic iron-sulfur assembly component 3 of Rattus norvegicus (Rat).